Here is a 402-residue protein sequence, read N- to C-terminus: Pyridinium-3,5-bisthiocarboxylic acid mononucleotide nickel insertion protein (402 aa).

The protein belongs to the LarC family.

It carries out the reaction Ni(II)-pyridinium-3,5-bisthiocarboxylate mononucleotide = pyridinium-3,5-bisthiocarboxylate mononucleotide + Ni(2+). In terms of biological role, involved in the biosynthesis of a nickel-pincer cofactor ((SCS)Ni(II) pincer complex). Binds Ni(2+), and functions in nickel delivery to pyridinium-3,5-bisthiocarboxylic acid mononucleotide (P2TMN), to form the mature cofactor. Is thus probably required for the activation of nickel-pincer cofactor-dependent enzymes. In Thermotoga sp. (strain RQ2), this protein is Pyridinium-3,5-bisthiocarboxylic acid mononucleotide nickel insertion protein.